The primary structure comprises 156 residues: Ribosomal RNA large subunit methyltransferase H (156 aa).

S-adenosyl-L-methionine-binding positions include L73, G104, and I123–L128.

Belongs to the RNA methyltransferase RlmH family. In terms of assembly, homodimer.

The protein localises to the cytoplasm. The catalysed reaction is pseudouridine(1915) in 23S rRNA + S-adenosyl-L-methionine = N(3)-methylpseudouridine(1915) in 23S rRNA + S-adenosyl-L-homocysteine + H(+). Functionally, specifically methylates the pseudouridine at position 1915 (m3Psi1915) in 23S rRNA. In Burkholderia vietnamiensis (strain G4 / LMG 22486) (Burkholderia cepacia (strain R1808)), this protein is Ribosomal RNA large subunit methyltransferase H.